The primary structure comprises 443 residues: Phosphoglucosamine mutase (443 aa).

Serine 103 (phosphoserine intermediate) is an active-site residue. The Mg(2+) site is built by serine 103, aspartate 244, aspartate 246, and aspartate 248. The residue at position 103 (serine 103) is a Phosphoserine.

Belongs to the phosphohexose mutase family. Mg(2+) serves as cofactor. In terms of processing, activated by phosphorylation.

It carries out the reaction alpha-D-glucosamine 1-phosphate = D-glucosamine 6-phosphate. In terms of biological role, catalyzes the conversion of glucosamine-6-phosphate to glucosamine-1-phosphate. The polypeptide is Phosphoglucosamine mutase (Pelagibacter ubique (strain HTCC1062)).